The chain runs to 418 residues: MKLDKSRKLYAEALNLMPGGVSSPVRAFKPHPFYTARGKGSKIYDVDGNAYIDYCMAYGPLVLGHANEVVKNALAEQLERGWLYGTPIELEIEYAKLIQKYFPSMEMLRFVNTGSEATMAALRVARGFTGRDKIVKVEGSFHGAHDAVLVKAGSGATTHGIPNSAGVPADFVKNTLQVPFNDIEALSEILEKNEVAALILEPVMGNSSLILPEKDYLKEVRKVTAENDVLLIFDEVITGFRVSMGGAQEYYGVKPDLTTLGKIAGGGLPIGIFGGRKEIMERVAPSGDVYQAGTFSGNPLSLTAGYATVKFMEENGVIEKVNSLTEKLVSGIADVLEDKKAECEVGSLASMFCIYFGPTPRNYAEALQLNKERFMEFFWRMLENGVFLPPSQYETCFVSFAHTEEDVEKTVEAVSESL.

Lys262 is modified (N6-(pyridoxal phosphate)lysine).

Belongs to the class-III pyridoxal-phosphate-dependent aminotransferase family. HemL subfamily. The cofactor is pyridoxal 5'-phosphate.

The protein resides in the cytoplasm. The enzyme catalyses (S)-4-amino-5-oxopentanoate = 5-aminolevulinate. The protein operates within porphyrin-containing compound metabolism; protoporphyrin-IX biosynthesis; 5-aminolevulinate from L-glutamyl-tRNA(Glu): step 2/2. This chain is Glutamate-1-semialdehyde 2,1-aminomutase (hemL), found in Archaeoglobus fulgidus (strain ATCC 49558 / DSM 4304 / JCM 9628 / NBRC 100126 / VC-16).